We begin with the raw amino-acid sequence, 444 residues long: Transmembrane protein with metallophosphoesterase domain (444 aa).

Transmembrane regions (helical) follow at residues 7-27, 43-63, 87-107, 114-134, and 162-182; these read LSLG…MIVS, LFRL…SIYI, MVVA…IFLV, FSLV…FLCV, and LALR…VGLL. A divalent metal cation contacts are provided by aspartate 214, histidine 216, aspartate 246, asparagine 277, histidine 382, and histidine 384.

Belongs to the metallophosphoesterase superfamily. LOC643853 family. It depends on a divalent metal cation as a cofactor.

It is found in the membrane. The protein is Transmembrane protein with metallophosphoesterase domain (TMPPE) of Bos taurus (Bovine).